Reading from the N-terminus, the 122-residue chain is Small ribosomal subunit protein uS13 (122 aa).

Residues 99 to 122 (RGQRTHTNARTRKGPAKAIAGKKK) are disordered.

This sequence belongs to the universal ribosomal protein uS13 family. Part of the 30S ribosomal subunit. Forms a loose heterodimer with protein S19. Forms two bridges to the 50S subunit in the 70S ribosome.

Functionally, located at the top of the head of the 30S subunit, it contacts several helices of the 16S rRNA. In the 70S ribosome it contacts the 23S rRNA (bridge B1a) and protein L5 of the 50S subunit (bridge B1b), connecting the 2 subunits; these bridges are implicated in subunit movement. Contacts the tRNAs in the A and P-sites. This Cereibacter sphaeroides (strain ATCC 17029 / ATH 2.4.9) (Rhodobacter sphaeroides) protein is Small ribosomal subunit protein uS13.